The chain runs to 172 residues: Stellate protein CG33236/CG33240/CG33244/CG33245 (172 aa).

This sequence belongs to the casein kinase 2 subunit beta family. As to quaternary structure, interacts in vitro with the casein kinase 2 alpha subunit (CkII-alpha). The relevance of such interaction is however unclear in vivo. As to expression, probably not expressed in wild-type flies. In males lacking the Y chromosome, it is testis-specific and constitutes the main component of star-shaped crystals.

In terms of biological role, unknown. In males lacking the Y chromosome, its strong overexpression leads to the appearance of proteinaceous star-shaped crystals in the primary spermatocytes causing meiotic drive, possibly by interfering with normal casein kinase 2 activity. The polypeptide is Stellate protein CG33236/CG33240/CG33244/CG33245 (Ste:CG33236) (Drosophila melanogaster (Fruit fly)).